Consider the following 170-residue polypeptide: Cathelicidin antimicrobial peptide (170 aa).

An N-terminal signal peptide occupies residues 1–30 (MDTQRDSPSLGRWSLVLLLLGLVMPLAIVA). Positions 31 to 131 (QVLSYQEAVL…DISCDKDNRR (101 aa)) are cleaved as a propeptide — cathelin-like domain (CLD). Intrachain disulfides connect cysteine 86/cysteine 97 and cysteine 108/cysteine 125. The interval 150-162 (FKRIVQRIKDFLQ) is active core.

This sequence belongs to the cathelicidin family. As to quaternary structure, monomer, homodimer or homotrimer (in vitro). Oligomerizes as tetra- or hexamer in solution (in vitro). Proteolytically cleaved by proteinase PRTN3 into antibacterial peptide LL-37. Proteolytically cleaved by cathepsin CTSG and neutrophil elastase ELANE. Post-translationally, resistant to proteolytic degradation in solution, and when bound to both zwitterionic (mimicking mammalian membranes) and negatively charged membranes (mimicking bacterial membranes). In terms of processing, after secretion onto the skin surface, the CAMP gene product is processed by a serine protease-dependent mechanism into multiple novel antimicrobial peptides distinct from and shorter than cathelicidin LL-37. These peptides show enhanced antimicrobial action, acquiring the ability to kill skin pathogens such as S.aureus, E.coli and C.albicans. These peptides have lost the ability to stimulate CXCL8/IL8 release from keratinocytes. The peptides act synergistically, killing bacteria at lower concentrations when present together, and maintain activity at increased salt condition.

Its subcellular location is the secreted. The protein localises to the vesicle. Its function is as follows. Antimicrobial protein that is an integral component of the innate immune system. Binds to bacterial lipopolysaccharides (LPS). Acts via neutrophil N-formyl peptide receptors to enhance the release of CXCL2. Postsecretory processing generates multiple cathelicidin antimicrobial peptides with various lengths which act as a topical antimicrobial defense in sweat on skin. The unprocessed precursor form, cathelicidin antimicrobial peptide, inhibits the growth of Gram-negative E.coli and E.aerogenes with efficiencies comparable to that of the mature peptide LL-37 (in vitro). Functionally, antimicrobial peptide that is an integral component of the innate immune system. Binds to bacterial lipopolysaccharides (LPS). Causes membrane permeabilization by forming transmembrane pores (in vitro). Causes lysis of E.coli. Exhibits antimicrobial activity against Gram-negative bacteria such as P.aeruginosa, S.typhimurium, E.aerogenes, E.coli and P.syringae, Gram-positive bacteria such as L.monocytogenes, S.epidermidis, S.pyogenes and S.aureus, as well as vancomycin-resistant enterococci (in vitro). Exhibits antimicrobial activity against methicillin-resistant S.aureus, P.mirabilis, and C.albicans in low-salt media, but not in media containing 100 mM NaCl (in vitro). Forms chiral supramolecular assemblies with quinolone signal (PQS) molecules of P.aeruginosa, which may lead to interference of bacterial quorum signaling and perturbance of bacterial biofilm formation. May form supramolecular fiber-like assemblies on bacterial membranes. Induces cytokine and chemokine producation as well as TNF/TNFA and CSF2/GMCSF production in normal human keratinocytes. Exhibits hemolytic activity against red blood cells. Exhibits antimicrobial activity against E.coli and B.megaterium (in vitro). This chain is Cathelicidin antimicrobial peptide, found in Nomascus leucogenys (Northern white-cheeked gibbon).